The chain runs to 499 residues: Glycerol kinase (499 aa).

Thr-13 is an ADP binding site. Positions 13, 14, and 15 each coordinate ATP. Thr-13 contributes to the sn-glycerol 3-phosphate binding site. Arg-17 lines the ADP pocket. 4 residues coordinate sn-glycerol 3-phosphate: Arg-83, Glu-84, Tyr-135, and Asp-245. Arg-83, Glu-84, Tyr-135, Asp-245, and Gln-246 together coordinate glycerol. 2 residues coordinate ADP: Thr-267 and Gly-310. ATP is bound by residues Thr-267, Gly-310, Gln-314, and Ala-411. Ala-411 and Asn-415 together coordinate ADP.

This sequence belongs to the FGGY kinase family.

The catalysed reaction is glycerol + ATP = sn-glycerol 3-phosphate + ADP + H(+). It functions in the pathway polyol metabolism; glycerol degradation via glycerol kinase pathway; sn-glycerol 3-phosphate from glycerol: step 1/1. Its activity is regulated as follows. Inhibited by fructose 1,6-bisphosphate (FBP). Its function is as follows. Key enzyme in the regulation of glycerol uptake and metabolism. Catalyzes the phosphorylation of glycerol to yield sn-glycerol 3-phosphate. This is Glycerol kinase from Xylella fastidiosa (strain M23).